Consider the following 338-residue polypeptide: Tetraacyldisaccharide 4'-kinase (338 aa).

Residue 67–74 coordinates ATP; that stretch reads IAGGAGKT.

The protein belongs to the LpxK family.

It catalyses the reaction a lipid A disaccharide + ATP = a lipid IVA + ADP + H(+). The protein operates within glycolipid biosynthesis; lipid IV(A) biosynthesis; lipid IV(A) from (3R)-3-hydroxytetradecanoyl-[acyl-carrier-protein] and UDP-N-acetyl-alpha-D-glucosamine: step 6/6. Its function is as follows. Transfers the gamma-phosphate of ATP to the 4'-position of a tetraacyldisaccharide 1-phosphate intermediate (termed DS-1-P) to form tetraacyldisaccharide 1,4'-bis-phosphate (lipid IVA). The chain is Tetraacyldisaccharide 4'-kinase from Acidovorax sp. (strain JS42).